We begin with the raw amino-acid sequence, 552 residues long: MTKFVFVTGGVVSSLGKGIASASLAAILESRGLKVTLIKLDPYINVDPGTMSPFQHGEVFVTDDGAETDLDLGHYERFIETRMKQANNFTTGRIYQSVLEKERRGDYLGKTVQVIPHVTNEIQEFIKRGAGIGTPDAVDVAICEVGGTVGDIESLPFLEAVRQLSLKLGPNNSAFVHLTYLPWIAAAGELKTKPTQHTVQKLREIGIQPDALLCRALHAVPEEEKEKISLFTNVAEWGVISMWDVDTIYKVPRMLHEQGLDGLICDKLRLNTPPANLKRWDDLVYETEHPRGEVQIAMVGKYVELSDAYKSVNEALKHAGMQSHVRVKITHLDSETITDDNAAQQLAQYDAILVPGGFGSRGVEGKISTARYAREHKVPYLGICLGMQVATIEYARHVAGLAGANSTEFDAHCKHPVIALITEWKDEDGTIKTRDANSDLGGTMRLGAQSSDVQPGTLAHSIYGDVVTERHRHRYEANVQYLDKLRTAGLVISALTQREHLTEIVELPKSVHPWYIGVQFHPEFKSTPWSGHPLFNAFIKAAVEHQKPAAKA.

The tract at residues 1-270 is amidoligase domain; that stretch reads MTKFVFVTGG…DGLICDKLRL (270 aa). Ser-13 is a CTP binding site. Ser-13 contacts UTP. ATP is bound by residues 14–19 and Asp-71; that span reads SLGKGI. The Mg(2+) site is built by Asp-71 and Glu-144. CTP is bound by residues 151 to 153, 191 to 196, and Lys-227; these read DIE and KTKPTQ. UTP contacts are provided by residues 191–196 and Lys-227; that span reads KTKPTQ. Residues 295 to 548 enclose the Glutamine amidotransferase type-1 domain; it reads QIAMVGKYVE…IKAAVEHQKP (254 aa). An L-glutamine-binding site is contributed by Gly-357. Cys-384 functions as the Nucleophile; for glutamine hydrolysis in the catalytic mechanism. Residues 385–388, Glu-408, and Arg-474 each bind L-glutamine; that span reads LGMQ. Residues His-521 and Glu-523 contribute to the active site.

Belongs to the CTP synthase family. As to quaternary structure, homotetramer.

The enzyme catalyses UTP + L-glutamine + ATP + H2O = CTP + L-glutamate + ADP + phosphate + 2 H(+). It catalyses the reaction L-glutamine + H2O = L-glutamate + NH4(+). The catalysed reaction is UTP + NH4(+) + ATP = CTP + ADP + phosphate + 2 H(+). It participates in pyrimidine metabolism; CTP biosynthesis via de novo pathway; CTP from UDP: step 2/2. Its activity is regulated as follows. Allosterically activated by GTP, when glutamine is the substrate; GTP has no effect on the reaction when ammonia is the substrate. The allosteric effector GTP functions by stabilizing the protein conformation that binds the tetrahedral intermediate(s) formed during glutamine hydrolysis. Inhibited by the product CTP, via allosteric rather than competitive inhibition. In terms of biological role, catalyzes the ATP-dependent amination of UTP to CTP with either L-glutamine or ammonia as the source of nitrogen. Regulates intracellular CTP levels through interactions with the four ribonucleotide triphosphates. In Acidovorax ebreus (strain TPSY) (Diaphorobacter sp. (strain TPSY)), this protein is CTP synthase.